A 297-amino-acid chain; its full sequence is UBX domain-containing protein 1 (297 aa).

N-acetylalanine is present on Ala2. A UBA domain is found at 2–42 (AELTALESLIEMGFPRGRAEKALALTGNQGIEAAMDWLMEH). The interval 38-214 (WLMEHEDDPD…PPTKREYDQC (177 aa)) is disordered. Positions 42–52 (HEDDPDVDEPL) are enriched in acidic residues. The interval 43 to 297 (EDDPDVDEPL…VLIVAKKCPS (255 aa)) is interaction with BRCA1. 2 stretches are compositionally biased toward basic and acidic residues: residues 86 to 122 (LTEEERQEQTKRMLELVAQKQREREEREEREALEREK) and 137 to 177 (KLQE…ERAK). Ser199 is modified (phosphoserine). The residue at position 200 (Ser200) is a Phosphoserine; by MAPK12. Phosphothreonine is present on residues Thr207 and Thr229. Positions 209-291 (REYDQCRIQV…GLVPSAVLIV (83 aa)) constitute a UBX domain. A Phosphoserine modification is found at Ser270.

In terms of assembly, interacts with MAVS; this interaction prevents MAVS oligomerization and thus disrupts the RLR signaling pathway. Interacts with CUL1; this interaction inhibits CUL1-mediated degradation of NF-kappa-B inhibitors. Interacts with BIRC2/c-IAP1; this interaction prevents TNFalpha-stimulated RIP1 ubiquitination and subsequent NF-kappa-B activation. Component of a complex required to couple retrotranslocation, ubiquitination and deglycosylation composed of NGLY1, SAKS1, AMFR, VCP and RAD23B. Interacts with HOMER2. Interacts directly with VCP. Interacts with BRCA1 and BARD1; interaction takes place when BRCA1 is not autoubiquitinated but is strongly enhanced in the presence of autoubiquitinated BRCA1.

Its subcellular location is the cytoplasm. Functionally, ubiquitin-binding protein that plays a role in the modulation of innate immune response. Blocks both the RIG-I-like receptors (RLR) and NF-kappa-B pathways. Following viral infection, UBXN1 is induced and recruited to the RLR component MAVS. In turn, interferes with MAVS oligomerization, and disrupts the MAVS/TRAF3/TRAF6 signalosome. This function probably serves as a brake to prevent excessive RLR signaling. Interferes with the TNFalpha-triggered NF-kappa-B pathway by interacting with cellular inhibitors of apoptosis proteins (cIAPs) and thereby inhibiting their recruitment to TNFR1. Also prevents the activation of NF-kappa-B by associating with CUL1 and thus inhibiting NF-kappa-B inhibitor alpha/NFKBIA degradation that remains bound to NF-kappa-B. Interacts with the BRCA1-BARD1 heterodimer and regulates its activity. Specifically binds 'Lys-6'-linked polyubiquitin chains. Interaction with autoubiquitinated BRCA1 leads to the inhibition of the E3 ubiquitin-protein ligase activity of the BRCA1-BARD1 heterodimer. Component of a complex required to couple deglycosylation and proteasome-mediated degradation of misfolded proteins in the endoplasmic reticulum that are retrotranslocated in the cytosol. This chain is UBX domain-containing protein 1 (Ubxn1), found in Mus musculus (Mouse).